Consider the following 195-residue polypeptide: Probable DNA-directed RNA polymerase subunit delta (195 aa).

Residues 14 to 83 (LSMIEVARAI…GDNKWGLRSW (70 aa)) form the HTH HARE-type domain. Composition is skewed to acidic residues over residues 119–138 (GDEDAIDYSDDDPEDEDSYE) and 145–195 (YDDE…GEEE). The disordered stretch occupies residues 119–195 (GDEDAIDYSD…SDDDAEGEEE (77 aa)).

It belongs to the RpoE family. In terms of assembly, RNAP is composed of a core of 2 alpha, a beta and a beta' subunits. The core is associated with a delta subunit and one of several sigma factors.

Its function is as follows. Participates in both the initiation and recycling phases of transcription. In the presence of the delta subunit, RNAP displays an increased specificity of transcription, a decreased affinity for nucleic acids, and an increased efficiency of RNA synthesis because of enhanced recycling. This Streptococcus gordonii (strain Challis / ATCC 35105 / BCRC 15272 / CH1 / DL1 / V288) protein is Probable DNA-directed RNA polymerase subunit delta.